The primary structure comprises 297 residues: Carboxysome assembly protein CcmO (297 aa).

The tract at residues 1–29 (MPTSPTMTSVPIARSPRPSYQQINQHQPS) is disordered. Positions 18–29 (PSYQQINQHQPS) are enriched in polar residues. BMC domains follow at residues 32-116 (ALGL…AVFP) and 138-222 (SIGL…HTLP).

It belongs to the bacterial microcompartments protein family. Homooligomerizes, possibly as a trimer, interacts with CcmK in the carboxysome.

Its subcellular location is the carboxysome. Its function is as follows. Required for formation of the carboxysome, a polyhedral inclusion where RuBisCO (ribulose bisphosphate carboxylase, rbcL-rbcS) is sequestered. Required for recruitment of major shell protein CcmK2 to the pre-carboxysome. Suggested to be a carboxysome shell protein. This chain is Carboxysome assembly protein CcmO, found in Synechocystis sp. (strain ATCC 27184 / PCC 6803 / Kazusa).